The primary structure comprises 131 residues: MCMTDPIADMLTRIRNAQAAEKKEVKIPSSKLKKAILKILKDEGYIESYQEIVSDGKLSVDICLKYFNGGPVISSLTRISKPGLRRYSSRNNLPKVMHGLGIAIVSTSKGVMTERSARAGGVGGELLCIVA.

Belongs to the universal ribosomal protein uS8 family. In terms of assembly, part of the 30S ribosomal subunit. Contacts proteins S5 and S12.

In terms of biological role, one of the primary rRNA binding proteins, it binds directly to 16S rRNA central domain where it helps coordinate assembly of the platform of the 30S subunit. The protein is Small ribosomal subunit protein uS8 of Nitrosomonas eutropha (strain DSM 101675 / C91 / Nm57).